The primary structure comprises 435 residues: Tryptophan synthase beta chain (435 aa).

An N6-(pyridoxal phosphate)lysine modification is found at lysine 92.

It belongs to the TrpB family. In terms of assembly, tetramer of two alpha and two beta chains. It depends on pyridoxal 5'-phosphate as a cofactor.

It catalyses the reaction (1S,2R)-1-C-(indol-3-yl)glycerol 3-phosphate + L-serine = D-glyceraldehyde 3-phosphate + L-tryptophan + H2O. Its pathway is amino-acid biosynthesis; L-tryptophan biosynthesis; L-tryptophan from chorismate: step 5/5. In terms of biological role, the beta subunit is responsible for the synthesis of L-tryptophan from indole and L-serine. This chain is Tryptophan synthase beta chain, found in Albidiferax ferrireducens (strain ATCC BAA-621 / DSM 15236 / T118) (Rhodoferax ferrireducens).